A 198-amino-acid polypeptide reads, in one-letter code: MPTLGVKGARERDKNSASGAGAGAGAGAGAGEKHRKGPRTTDPPKTGWALTKQRLVALSPTLRQRHLLFGDFLDDIGKVASMFPRESVELPYDMPDPRTWSQALNLPSEHQNRFLGLIKAAEARGRVHTLRLRYTRMRAEEISLLIQKQSSARAAIRLELFLPPQLKPTKIPDPLDRHERRRVETILEEEVDGNIFPR.

The tract at residues Met1 to Gly47 is disordered. The span at Ala20–Ala30 shows a compositional bias: gly residues.

This is Protein LKAAEAR1 (Lkaaear1) from Mus musculus (Mouse).